The primary structure comprises 118 residues: Small ribosomal subunit protein uS13 (118 aa).

Positions 94–118 (SLPVRGQRTKTNARTRKGPRKPIKK) are disordered.

Belongs to the universal ribosomal protein uS13 family. As to quaternary structure, part of the 30S ribosomal subunit. Forms a loose heterodimer with protein S19. Forms two bridges to the 50S subunit in the 70S ribosome.

Its function is as follows. Located at the top of the head of the 30S subunit, it contacts several helices of the 16S rRNA. In the 70S ribosome it contacts the 23S rRNA (bridge B1a) and protein L5 of the 50S subunit (bridge B1b), connecting the 2 subunits; these bridges are implicated in subunit movement. Contacts the tRNAs in the A and P-sites. This chain is Small ribosomal subunit protein uS13, found in Actinobacillus pleuropneumoniae serotype 5b (strain L20).